The primary structure comprises 630 residues: Cytochrome B pre-mRNA-processing protein 2 (630 aa).

The protein resides in the mitochondrion. Functionally, appears to be specifically required for the splicing of the terminal intron (bI5) of the cytochrome b pre-mRNA. Can also stimulates the splicing of the omega intron of the precursor of large ribosomal RNA. This Saccharomyces cerevisiae (strain ATCC 204508 / S288c) (Baker's yeast) protein is Cytochrome B pre-mRNA-processing protein 2 (CBP2).